The primary structure comprises 347 residues: Dihydroorotase (347 aa).

Positions 17 and 19 each coordinate Zn(2+). Substrate is bound by residues 19-21 and Asn-45; that span reads HLR. Positions 103, 140, and 178 each coordinate Zn(2+). Position 103 is an N6-carboxylysine (Lys-103). Substrate is bound at residue His-140. Residue Leu-223 participates in substrate binding. Asp-251 is a Zn(2+) binding site. Residue Asp-251 is part of the active site. Substrate-binding residues include His-255 and Ala-267.

Belongs to the metallo-dependent hydrolases superfamily. DHOase family. Class II DHOase subfamily. As to quaternary structure, homodimer. Zn(2+) is required as a cofactor.

It catalyses the reaction (S)-dihydroorotate + H2O = N-carbamoyl-L-aspartate + H(+). Its pathway is pyrimidine metabolism; UMP biosynthesis via de novo pathway; (S)-dihydroorotate from bicarbonate: step 3/3. Its function is as follows. Catalyzes the reversible cyclization of carbamoyl aspartate to dihydroorotate. This Pectobacterium carotovorum subsp. carotovorum (strain PC1) protein is Dihydroorotase.